Reading from the N-terminus, the 123-residue chain is Large ribosomal subunit protein uL14 (123 aa).

Belongs to the universal ribosomal protein uL14 family. In terms of assembly, part of the 50S ribosomal subunit. Forms a cluster with proteins L3 and L19. In the 70S ribosome, L14 and L19 interact and together make contacts with the 16S rRNA in bridges B5 and B8.

Binds to 23S rRNA. Forms part of two intersubunit bridges in the 70S ribosome. The polypeptide is Large ribosomal subunit protein uL14 (Escherichia coli O139:H28 (strain E24377A / ETEC)).